The primary structure comprises 213 residues: Uridine kinase (213 aa).

15 to 22 (GASASGKS) contributes to the ATP binding site.

Belongs to the uridine kinase family.

It is found in the cytoplasm. The enzyme catalyses uridine + ATP = UMP + ADP + H(+). The catalysed reaction is cytidine + ATP = CMP + ADP + H(+). The protein operates within pyrimidine metabolism; CTP biosynthesis via salvage pathway; CTP from cytidine: step 1/3. Its pathway is pyrimidine metabolism; UMP biosynthesis via salvage pathway; UMP from uridine: step 1/1. The protein is Uridine kinase of Yersinia pseudotuberculosis serotype O:1b (strain IP 31758).